The sequence spans 230 residues: Large ribosomal subunit protein uL1 (230 aa).

This sequence belongs to the universal ribosomal protein uL1 family. As to quaternary structure, part of the 50S ribosomal subunit.

In terms of biological role, binds directly to 23S rRNA. The L1 stalk is quite mobile in the ribosome, and is involved in E site tRNA release. Its function is as follows. Protein L1 is also a translational repressor protein, it controls the translation of the L11 operon by binding to its mRNA. The sequence is that of Large ribosomal subunit protein uL1 from Staphylococcus aureus (strain N315).